Consider the following 430-residue polypeptide: Hemagglutinin-esterase (430 aa).

The first 27 residues, methionine 1–serine 27, serve as a signal peptide directing secretion. The esterase domain first part stretch occupies residues leucine 16–valine 133. Residues lysine 28 to tyrosine 404 are Virion surface-facing. The active-site Nucleophile is serine 49. Cysteine 53 and cysteine 69 form a disulfide bridge. N-linked (GlcNAc...) asparagine; by host glycosylation is found at asparagine 88, asparagine 117, asparagine 159, asparagine 165, asparagine 247, asparagine 268, and asparagine 289. 3 cysteine pairs are disulfide-bonded: cysteine 120–cysteine 168, cysteine 207–cysteine 284, and cysteine 215–cysteine 257. The tract at residues glycine 134 to lysine 274 is receptor binding. Residues phenylalanine 275 to glutamate 390 are esterase domain second part. A disulfide bridge connects residues cysteine 315 and cysteine 320. Asparagine 324 carries an N-linked (GlcNAc...) asparagine; by host glycan. Residues aspartate 336 and histidine 339 each act as charge relay system in the active site. Asparagine 354 is a glycosylation site (N-linked (GlcNAc...) asparagine; by host). A disulfide bridge connects residues cysteine 357 and cysteine 382. Residues phenylalanine 405 to phenylalanine 425 form a helical membrane-spanning segment. Topologically, residues cysteine 426–tyrosine 430 are intravirion.

The protein belongs to the influenza type C/coronaviruses hemagglutinin-esterase family. Post-translationally, N-glycosylated.

Its subcellular location is the virion membrane. The protein resides in the host cell membrane. It catalyses the reaction N-acetyl-9-O-acetylneuraminate + H2O = N-acetylneuraminate + acetate + H(+). The catalysed reaction is N-acetyl-4-O-acetylneuraminate + H2O = N-acetylneuraminate + acetate + H(+). Functionally, structural protein that makes short spikes at the surface of the virus. Contains receptor binding and receptor-destroying activities. Mediates de-O-acetylation of N-acetyl-9-O-acetylneuraminic acid, which is probably the receptor determinant recognized by the virus on the surface of erythrocytes and susceptible cells. This receptor-destroying activity is important for virus release as it probably helps preventing self-aggregation and ensures the efficient spread of the progeny virus from cell to cell. May serve as a secondary viral attachment protein for initiating infection, the spike protein being the major one. Seems to be a 'luxury' protein that is not absolutely necessary for virus infection in culture. However, its presence in the virus may alter its pathogenicity. May become a target for both the humoral and the cellular branches of the immune system. This chain is Hemagglutinin-esterase (HE), found in Porcine torovirus (strain P10) (PoTV).